Reading from the N-terminus, the 37-residue chain is Palicourein (37 aa).

The segment at residues 1–37 (GDPTFCGETCRVIPVCTYSAALGCTCDDRSDGLCKRN) is a cross-link (cyclopeptide (Gly-Asn)). 3 cysteine pairs are disulfide-bonded: C6/C24, C10/C26, and C16/C34.

Belongs to the cyclotide family. Post-translationally, this is a cyclic peptide.

Probably participates in a plant defense mechanism. Inhibits the cytopathic effects of the human immunodeficiency virus. The polypeptide is Palicourein (Palicourea condensata (Cappel)).